Here is a 263-residue protein sequence, read N- to C-terminus: Small ribosomal subunit protein eS4 (263 aa).

The region spanning 42 to 104 (LPLIVFLRNR…TGEHFRLVYD (63 aa)) is the S4 RNA-binding domain.

The protein belongs to the eukaryotic ribosomal protein eS4 family.

The chain is Small ribosomal subunit protein eS4 (RPS4Y1) from Gorilla gorilla gorilla (Western lowland gorilla).